The following is a 286-amino-acid chain: Bifunctional protein FolD (286 aa).

Residues 165–167 (GRS), serine 190, and valine 231 each bind NADP(+).

It belongs to the tetrahydrofolate dehydrogenase/cyclohydrolase family. As to quaternary structure, homodimer.

It carries out the reaction (6R)-5,10-methylene-5,6,7,8-tetrahydrofolate + NADP(+) = (6R)-5,10-methenyltetrahydrofolate + NADPH. It catalyses the reaction (6R)-5,10-methenyltetrahydrofolate + H2O = (6R)-10-formyltetrahydrofolate + H(+). Its pathway is one-carbon metabolism; tetrahydrofolate interconversion. Its function is as follows. Catalyzes the oxidation of 5,10-methylenetetrahydrofolate to 5,10-methenyltetrahydrofolate and then the hydrolysis of 5,10-methenyltetrahydrofolate to 10-formyltetrahydrofolate. This chain is Bifunctional protein FolD, found in Bacillus anthracis (strain A0248).